The sequence spans 318 residues: Methionyl-tRNA formyltransferase (318 aa).

Residue 112–115 (SILP) coordinates (6S)-5,6,7,8-tetrahydrofolate.

This sequence belongs to the Fmt family.

It catalyses the reaction L-methionyl-tRNA(fMet) + (6R)-10-formyltetrahydrofolate = N-formyl-L-methionyl-tRNA(fMet) + (6S)-5,6,7,8-tetrahydrofolate + H(+). Attaches a formyl group to the free amino group of methionyl-tRNA(fMet). The formyl group appears to play a dual role in the initiator identity of N-formylmethionyl-tRNA by promoting its recognition by IF2 and preventing the misappropriation of this tRNA by the elongation apparatus. The polypeptide is Methionyl-tRNA formyltransferase (Shewanella sp. (strain ANA-3)).